The sequence spans 604 residues: Pescadillo homolog (604 aa).

The 100-residue stretch at 349 to 448 (PTSTLFSKFI…ELLPVNKYAP (100 aa)) folds into the BRCT domain. Disordered stretches follow at residues 452 to 562 (LPPH…MTNK) and 579 to 604 (TRTQ…LSKK). Coiled coils occupy residues 468 to 522 (EAEK…LEAA) and 573 to 604 (GIDK…LSKK). The span at 476 to 510 (ENAEEEEEDEVDEDDEDADEDEEDEEEEDEEEDED) shows a compositional bias: acidic residues. A compositionally biased stretch (basic and acidic residues) spans 593–604 (KTKAQLDKLSKK).

The protein belongs to the pescadillo family. In terms of assembly, component of the NOP7 complex, composed of ERB1, NOP7 and YTM1. The complex is held together by ERB1, which interacts with NOP7 via its N-terminal domain and with YTM1 via a high-affinity interaction between the seven-bladed beta-propeller domains of the 2 proteins. The NOP7 complex associates with the 66S pre-ribosome.

It localises to the nucleus. The protein localises to the nucleolus. The protein resides in the nucleoplasm. Component of the NOP7 complex, which is required for maturation of the 25S and 5.8S ribosomal RNAs and formation of the 60S ribosome. The sequence is that of Pescadillo homolog from Scheffersomyces stipitis (strain ATCC 58785 / CBS 6054 / NBRC 10063 / NRRL Y-11545) (Yeast).